The primary structure comprises 87 residues: UPF0367 protein SynWH7803_2240 (87 aa).

Belongs to the UPF0367 family.

In Synechococcus sp. (strain WH7803), this protein is UPF0367 protein SynWH7803_2240.